Here is a 175-residue protein sequence, read N- to C-terminus: Ribosome maturation factor RimM (175 aa).

Residues 98–175 (EGEYYWHQLE…EMRVDWDADF (78 aa)) form the PRC barrel domain.

Belongs to the RimM family. In terms of assembly, binds ribosomal protein uS19.

It is found in the cytoplasm. Its function is as follows. An accessory protein needed during the final step in the assembly of 30S ribosomal subunit, possibly for assembly of the head region. Essential for efficient processing of 16S rRNA. May be needed both before and after RbfA during the maturation of 16S rRNA. It has affinity for free ribosomal 30S subunits but not for 70S ribosomes. The chain is Ribosome maturation factor RimM from Pseudomonas aeruginosa (strain UCBPP-PA14).